The sequence spans 345 residues: MPSPFFAEEKDIPENQNVGNKRWKKLIKGEGSDDGKEKSSDDDDSSSSTKGLFGWRGDTSSGNLFDFPNTLTDVGETKQIVDATTIVDQLEAADLGAALNLKLSFLKQDFDELPVIKKLPDNLNDTIVAKSDNLEKTSKTNSTFYKDNGDSSEKQGSAESKNSPKTQLKEIFNGQNGDSGNLGKLAEQLQKTDSTKMEARSQTWQLRNAVSLKTTNMAQSDENYLLLDAAIPAFETSSQSPQSSGTISGSGALVNLTSTSVNLTQQKSSTTPLNQRIVRNSTGVKLLALEGLLYYVVGSSNKQQSSSSTIATSLAQNQSNNNQEQEINSSLQKNLLKFRAFQAKN.

Disordered regions lie at residues 1 to 58 (MPSP…WRGD) and 139 to 165 (KTNSTFYKDNGDSSEKQGSAESKNSPK). Residues 27 to 39 (IKGEGSDDGKEKS) are compositionally biased toward basic and acidic residues. Positions 154–165 (KQGSAESKNSPK) are enriched in polar residues.

This sequence belongs to the MG307/MG309/MG338 family.

This is an uncharacterized protein from Mycoplasma pneumoniae (strain ATCC 29342 / M129 / Subtype 1) (Mycoplasmoides pneumoniae).